A 78-amino-acid chain; its full sequence is MLVLSRKEGDQILIGDDIIIKVISIEKDCVKLGIDAPKNIKVLRYELLQEVKNENVEALQGKERLIRIKDLKGLFKDG.

This sequence belongs to the CsrA/RsmA family. In terms of assembly, homodimer; the beta-strands of each monomer intercalate to form a hydrophobic core, while the alpha-helices form wings that extend away from the core.

It localises to the cytoplasm. Functionally, a translational regulator that binds mRNA to regulate translation initiation and/or mRNA stability. Usually binds in the 5'-UTR at or near the Shine-Dalgarno sequence preventing ribosome-binding, thus repressing translation. Its main target seems to be the major flagellin gene, while its function is anatagonized by FliW. This is Translational regulator CsrA from Caldicellulosiruptor bescii (strain ATCC BAA-1888 / DSM 6725 / KCTC 15123 / Z-1320) (Anaerocellum thermophilum).